Reading from the N-terminus, the 352-residue chain is Glycerol-1-phosphate dehydrogenase [NAD(P)+] (352 aa).

NAD(+) contacts are provided by residues 99–103 (GTKID) and 121–124 (TSPS). Residue D126 participates in substrate binding. S130 contacts NAD(+). A substrate-binding site is contributed by D173. Residues D173 and H253 each contribute to the Zn(2+) site. A substrate-binding site is contributed by H257. H269 provides a ligand contact to Zn(2+).

It belongs to the glycerol-1-phosphate dehydrogenase family. Zn(2+) serves as cofactor.

It localises to the cytoplasm. The catalysed reaction is sn-glycerol 1-phosphate + NAD(+) = dihydroxyacetone phosphate + NADH + H(+). The enzyme catalyses sn-glycerol 1-phosphate + NADP(+) = dihydroxyacetone phosphate + NADPH + H(+). The protein operates within membrane lipid metabolism; glycerophospholipid metabolism. Functionally, catalyzes the NAD(P)H-dependent reduction of dihydroxyacetonephosphate (DHAP or glycerone phosphate) to glycerol 1-phosphate (G1P). The G1P thus generated is used as the glycerophosphate backbone of phospholipids in the cellular membranes of Archaea. The chain is Glycerol-1-phosphate dehydrogenase [NAD(P)+] from Thermoplasma volcanium (strain ATCC 51530 / DSM 4299 / JCM 9571 / NBRC 15438 / GSS1).